A 132-amino-acid chain; its full sequence is Small ribosomal subunit protein uS8 (132 aa).

It belongs to the universal ribosomal protein uS8 family. As to quaternary structure, part of the 30S ribosomal subunit. Contacts proteins S5 and S12.

Functionally, one of the primary rRNA binding proteins, it binds directly to 16S rRNA central domain where it helps coordinate assembly of the platform of the 30S subunit. The chain is Small ribosomal subunit protein uS8 from Pseudarthrobacter chlorophenolicus (strain ATCC 700700 / DSM 12829 / CIP 107037 / JCM 12360 / KCTC 9906 / NCIMB 13794 / A6) (Arthrobacter chlorophenolicus).